The chain runs to 252 residues: Hydroxyacylglutathione hydrolase (252 aa).

H54, H56, D58, H59, H111, D128, and H166 together coordinate Zn(2+).

This sequence belongs to the metallo-beta-lactamase superfamily. Glyoxalase II family. Monomer. It depends on Zn(2+) as a cofactor.

The catalysed reaction is an S-(2-hydroxyacyl)glutathione + H2O = a 2-hydroxy carboxylate + glutathione + H(+). Its pathway is secondary metabolite metabolism; methylglyoxal degradation; (R)-lactate from methylglyoxal: step 2/2. Thiolesterase that catalyzes the hydrolysis of S-D-lactoyl-glutathione to form glutathione and D-lactic acid. This chain is Hydroxyacylglutathione hydrolase, found in Vibrio parahaemolyticus serotype O3:K6 (strain RIMD 2210633).